A 168-amino-acid polypeptide reads, in one-letter code: Mitochondrial inner membrane protein Mpv17 (168 aa).

4 helical membrane-spanning segments follow: residues 12–29 (INVA…QFFF), 41–61 (RTLR…RRWY), 82–101 (MLVD…SFLV), and 144–166 (LGYQ…SMIL).

It belongs to the peroxisomal membrane protein PXMP2/4 family. As to quaternary structure, part of a larger complex that may be a homohexamer.

The protein resides in the mitochondrion inner membrane. In terms of biological role, non-selective channel that modulates the membrane potential under normal conditions and oxidative stress, and is involved in mitochondrial homeostasis. Can translocate uridine, but not orotate, across a lipid membrane. Involved in maintenance of mitochondrial ultrastructure. May be involved in mitochondrial DNA (mtDNA) maintenance but does not appear to be directly involved in mitochondrial deoxynucleoside triphosphate (dNTP) pool homeostasis. May be involved in the regulation of reactive oxygen species metabolism and the control of oxidative phosphorylation. The polypeptide is Mitochondrial inner membrane protein Mpv17 (Drosophila melanogaster (Fruit fly)).